Reading from the N-terminus, the 333-residue chain is Mitochondrial glycine transporter (333 aa).

3 Solcar repeats span residues 10–93 (SKST…IRQS), 125–209 (LSNT…GKKR), and 235–319 (HAAS…LIRR). A run of 2 helical transmembrane segments spans residues 16-41 (FAAG…TRVQ) and 68-94 (GAVP…RQSA). The disordered stretch occupies residues 98-126 (SPLPSSSSSTTTSSSTTTSSSSSSLPKLS). The next 4 membrane-spanning stretches (helical) occupy residues 131 to 156 (LLAG…VRYE), 184 to 207 (GYGA…EQGK), 239 to 265 (INFA…KTRI), and 294 to 312 (GLAL…AWTV).

The protein belongs to the mitochondrial carrier (TC 2.A.29) family. SLC25A38 subfamily.

The protein localises to the mitochondrion inner membrane. It catalyses the reaction glycine(in) = glycine(out). Functionally, mitochondrial glycine transporter that imports glycine into the mitochondrial matrix. Plays an important role in providing glycine for the first enzymatic step in heme biosynthesis, the condensation of glycine with succinyl-CoA to produce 5-aminolevulinate (ALA) in the mitochondrial matrix. The protein is Mitochondrial glycine transporter of Chaetomium globosum (strain ATCC 6205 / CBS 148.51 / DSM 1962 / NBRC 6347 / NRRL 1970) (Soil fungus).